The primary structure comprises 27 residues: Zinc metalloproteinase multactivase catalytic subunit (27 aa).

Positions 12–27 constitute a Peptidase M12B domain; sequence FIELVIIVDHSXXTYK. Glu-14 contributes to the Ca(2+) binding site.

It belongs to the venom metalloproteinase (M12B) family. P-III subfamily. P-IIId sub-subfamily. As to quaternary structure, heterodimer of a metalloproteinase subunit and a regulatory subunit comprising two homologous disulfide-linked lectins (AC P81798). The cofactor is Zn(2+). Expressed by the venom gland.

It is found in the secreted. This carinactivase-like calcium-dependent prothrombin (F2) activator activates prothrombin via recognition of the calcium ion bound conformation of its gamma-carboxyglutamic acid (GLA) domain, and the subsequent conversion of prothrombin to active thrombin is catalyzed by the catalytic subunit. This is Zinc metalloproteinase multactivase catalytic subunit from Echis multisquamatus (Central Asian sand viper).